Consider the following 102-residue polypeptide: Pole-localizer protein TmaR (102 aa).

Residues 7-34 are a coiled coil; sequence IINQARRKNKLKRELQDNQKKIRDNQKR.

The protein belongs to the pole-localizer TmaR family.

The protein resides in the cytoplasm. Functionally, pole-localizer protein involved in the regulation of several cellular processes. In Aliivibrio fischeri (strain ATCC 700601 / ES114) (Vibrio fischeri), this protein is Pole-localizer protein TmaR.